We begin with the raw amino-acid sequence, 266 residues long: MRTEPLCGASPLLVPGDPYSVVVLLQGYAEPEGVGDAVRADGSVTLVLPQTRGPASSHRESPRGSGGAEAALEEAARGPILVDTGGPWAREALLGALAGQGVAPGDVTLVVGTHGHSDHIGNLGLFPGAALLVSHDFCLPGGRYLPHGLGEGQPLRLGPGLEVWATPGHGGQRDVSVVVAGTALGTVVVAGDVFERDGDEDSWQALSEDPAAQERSRKRVLVVADVVVPGHGPPFRVLREASQPETEGGGNSQQEPVVGDEEPALH.

A disordered region spans residues 48 to 71; sequence LPQTRGPASSHRESPRGSGGAEAA. H114, H116, D118, H119, H169, D192, and H231 together coordinate Zn(2+). Residues 229 to 266 are disordered; it reads PGHGPPFRVLREASQPETEGGGNSQQEPVVGDEEPALH.

Belongs to the metallo-beta-lactamase superfamily. Glyoxalase II family. Homodimer. Zn(2+) serves as cofactor.

The protein localises to the cytoplasm. It is found in the cytosol. Its subcellular location is the nucleus. It carries out the reaction a ribonucleotidyl-ribonucleotide-RNA + H2O = a 3'-end ribonucleotide-RNA + a 5'-end 5'-phospho-ribonucleoside-RNA + H(+). Endoribonuclease that catalyzes the hydrolysis of histone-coding pre-mRNA 3'-end. Involved in histone pre-mRNA processing during the S-phase of the cell cycle, which is required for entering/progressing through S-phase. Cleaves histone pre-mRNA at a major and a minor cleavage site after the 5'-ACCCA-3' and the 5'-ACCCACA-3' sequence, respectively, and located downstream of the stem-loop. May require the presence of the HDE element located at the histone pre-RNA 3'-end to avoid non-specific cleavage. This chain is Metallo-beta-lactamase domain-containing protein 1, found in Homo sapiens (Human).